A 299-amino-acid polypeptide reads, in one-letter code: UDP-N-acetylenolpyruvoylglucosamine reductase (299 aa).

In terms of domain architecture, FAD-binding PCMH-type spans 28–193; it reads IGGPVDLMVL…VSALMQLHKE (166 aa). The active site involves arginine 172. Serine 222 serves as the catalytic Proton donor. Glutamate 292 is an active-site residue.

It belongs to the MurB family. Requires FAD as cofactor.

It is found in the cytoplasm. It catalyses the reaction UDP-N-acetyl-alpha-D-muramate + NADP(+) = UDP-N-acetyl-3-O-(1-carboxyvinyl)-alpha-D-glucosamine + NADPH + H(+). Its pathway is cell wall biogenesis; peptidoglycan biosynthesis. In terms of biological role, cell wall formation. In Syntrophomonas wolfei subsp. wolfei (strain DSM 2245B / Goettingen), this protein is UDP-N-acetylenolpyruvoylglucosamine reductase.